Reading from the N-terminus, the 366-residue chain is N-methyltransferase fsqC (366 aa).

An N-terminal signal peptide occupies residues 1-18 (MSSNVQDIRGWPPPFANA). N-linked (GlcNAc...) asparagine glycosylation occurs at asparagine 270.

It belongs to the methyltransferase superfamily.

It participates in secondary metabolite biosynthesis. In terms of biological role, N-methyltransferase; part of the gene cluster that mediates the biosynthesis of the isoquinoline alkaloids fumisoquin A, fumisoquin B and fumisoquin C; as well as small amounts of fumipyrrole as a shunt metabolite. The products of the cluster lead to a brown coloration and are important for growth and conidiation. The nonribosomal peptide synthetase-like protein fsqF, which lacks a canonical condensation domain, is required for addition of a serine-derived dehydroalanine moiety to activated tyrosine but is not essential for the subsequent steps leading to isoquinoline formation. A different enzyme, most likely the ATP-grasp enzyme fsqD, is responsible for activation of tyrosine. Three additional enzymes encoded by the fsq cluster, the N-methyltransferase fsqC, the phenol 2-monooxygenase fsqG and the FAD-dependent oxidase fsqB, catalyze the formation of the isoquinoline ring system in the fumisoquins. FsqB converts the fspF thiolation domain-bound (2S,4S,5S)-2-amino-6-(3,4-dihydroxyphenyl)-4-hydroxy-5-(methylamino)hexanoyl into isoquinoline. The cyclization most likely proceeds via a two-step mechanism, beginning with FAD-dependent oxidation of the methyl group to an iminium species followed by electrophilic attack on the deprotonated phenol. This Aspergillus fumigatus (strain ATCC MYA-4609 / CBS 101355 / FGSC A1100 / Af293) (Neosartorya fumigata) protein is N-methyltransferase fsqC.